The sequence spans 162 residues: Sorting nexin-3 (162 aa).

Alanine 2 is modified (N-acetylalanine). One can recognise a PX domain in the interval 27–151 (NFLEIDVSNP…HMFLQDEIID (125 aa)). Arginine 43 carries the omega-N-methylarginine modification. A 1,2-diacyl-sn-glycero-3-phospho-(1D-myo-inositol-3-phosphate) contacts are provided by arginine 70, serine 72, lysine 95, and arginine 118. Residue serine 72 is modified to Phosphoserine. Residue lysine 95 forms a Glycyl lysine isopeptide (Lys-Gly) (interchain with G-Cter in SUMO2) linkage. The tract at residues 147–162 (DEIIDKSYTPSKIRHA) is binds predominantly to PtdIns(P5) and weaker to PtdIns(P3) abd PtdIns(P4); involved in neurite outgrowth regulation.

The protein belongs to the sorting nexin family. As to quaternary structure, interacts with VPS26A, VPS29. Interacts with VPS35; the interaction with VPS35 is direct. The association with the retromer CSC subcomplex subunits is proposed to represent a functional distinct retromer variant described as SNX3-retromer complex. Interacts with USP10 and SCNN1A. Interacts with TRFC. Interacts with SNX8; 2 molecules of SNX8 seems to associate with one molecule of SNX3. Interacts with PTPRU. Interacts with MON2 and DOP1B. Ubiquitinated, leading to its proteasomal degradation. Deubiquitinated by USP10. As to expression, highly expressed in developing red cells and hematopoietic tissues.

The protein localises to the early endosome. It is found in the cytoplasmic vesicle. It localises to the phagosome. Functionally, phosphoinositide-binding protein required for multivesicular body formation. Specifically binds phosphatidylinositol 3-phosphate (PtdIns(P3)). Can also bind phosphatidylinositol 4-phosphate (PtdIns(P4)), phosphatidylinositol 5-phosphate (PtdIns(P5)) and phosphatidylinositol 3,5-biphosphate (PtdIns(3,5)P2). Plays a role in protein transport between cellular compartments. Together with RAB7A facilitates endosome membrane association of the retromer cargo-selective subcomplex (CSC). May act in part as component of the SNX3-retromer complex which mediates the retrograde endosome-to-TGN transport of WLS distinct from the SNX-BAR retromer pathway. Promotes stability and cell surface expression of epithelial sodium channel (ENAC) subunits SCNN1A and SCNN1G. Not involved in EGFR degradation. Involved in the regulation of phagocytosis in dendritic cells possibly by regulating EEA1 recruitment to the nascent phagosomes. Involved in iron homeostasis through regulation of endocytic recycling of the transferrin receptor Tfrc presuambly by delivering the transferrin:transferrin receptor complex to recycling endosomes; the function may involve the CSC retromer subcomplex. Involved in regulation of neurite outgrowth in primary neurons. The sequence is that of Sorting nexin-3 (Snx3) from Mus musculus (Mouse).